The following is a 721-amino-acid chain: Teichoic acid poly(glycerol phosphate) polymerase (721 aa).

CDP-glycerol contacts are provided by residues 443 to 447, arginine 511, 545 to 546, 582 to 584, 624 to 625, and aspartate 629; these read WHGTP, PT, RMH, and SS.

Belongs to the CDP-glycerol glycerophosphotransferase family.

It localises to the cell membrane. It catalyses the reaction 4-O-[(2R)-glycerylphospho]-N-acetyl-beta-D-mannosaminyl-(1-&gt;4)-N-acetyl-alpha-D-glucosaminyl di-trans,octa-cis-undecaprenyl diphosphate + n CDP-glycerol = 4-O-{[(2R)-1-glycerylphospho](n)-(2R)-1-glycerylphospho}-N-acetyl-beta-D-mannosaminyl-(1-&gt;4)-N-acetyl-alpha-D-glucosaminyl undecaprenyl diphosphate + n CMP + n H(+). It participates in cell wall biogenesis; poly(glycerol phosphate) teichoic acid biosynthesis. In terms of biological role, responsible for the polymerization of the main chain of the major teichoic acid by sequential transfer of glycerol phosphate units from CDP-glycerol to the disaccharide linkage unit. Synthesizes polymers of approximately 35 glycerol phosphate units in length. The polypeptide is Teichoic acid poly(glycerol phosphate) polymerase (Staphylococcus epidermidis (strain ATCC 35984 / DSM 28319 / BCRC 17069 / CCUG 31568 / BM 3577 / RP62A)).